A 255-amino-acid polypeptide reads, in one-letter code: 1-(5-phosphoribosyl)-5-[(5-phosphoribosylamino)methylideneamino] imidazole-4-carboxamide isomerase (255 aa).

Aspartate 8 (proton acceptor) is an active-site residue. Aspartate 129 serves as the catalytic Proton donor.

Belongs to the HisA/HisF family.

It localises to the cytoplasm. The catalysed reaction is 1-(5-phospho-beta-D-ribosyl)-5-[(5-phospho-beta-D-ribosylamino)methylideneamino]imidazole-4-carboxamide = 5-[(5-phospho-1-deoxy-D-ribulos-1-ylimino)methylamino]-1-(5-phospho-beta-D-ribosyl)imidazole-4-carboxamide. Its pathway is amino-acid biosynthesis; L-histidine biosynthesis; L-histidine from 5-phospho-alpha-D-ribose 1-diphosphate: step 4/9. This Synechococcus sp. (strain CC9605) protein is 1-(5-phosphoribosyl)-5-[(5-phosphoribosylamino)methylideneamino] imidazole-4-carboxamide isomerase.